The sequence spans 252 residues: Thiazole synthase (252 aa).

Lysine 91 acts as the Schiff-base intermediate with DXP in catalysis. 1-deoxy-D-xylulose 5-phosphate is bound by residues glycine 152, 179-180, and 201-202; these read AG and NT.

This sequence belongs to the ThiG family. Homotetramer. Forms heterodimers with either ThiH or ThiS.

The protein resides in the cytoplasm. The catalysed reaction is [ThiS sulfur-carrier protein]-C-terminal-Gly-aminoethanethioate + 2-iminoacetate + 1-deoxy-D-xylulose 5-phosphate = [ThiS sulfur-carrier protein]-C-terminal Gly-Gly + 2-[(2R,5Z)-2-carboxy-4-methylthiazol-5(2H)-ylidene]ethyl phosphate + 2 H2O + H(+). It participates in cofactor biosynthesis; thiamine diphosphate biosynthesis. Catalyzes the rearrangement of 1-deoxy-D-xylulose 5-phosphate (DXP) to produce the thiazole phosphate moiety of thiamine. Sulfur is provided by the thiocarboxylate moiety of the carrier protein ThiS. In vitro, sulfur can be provided by H(2)S. This is Thiazole synthase from Erwinia pyrifoliae (strain DSM 12162 / Ep1/96).